The chain runs to 375 residues: Alcohol dehydrogenase 1A (375 aa).

At serine 2 the chain carries N-acetylserine. Serine 23 is subject to Phosphoserine. Cysteine 47 provides a ligand contact to Zn(2+). 48–52 provides a ligand contact to NAD(+); sequence GTDDH. Zn(2+) is bound by residues histidine 68, cysteine 98, cysteine 101, cysteine 104, cysteine 112, and cysteine 175. NAD(+) is bound by residues 200 to 205, aspartate 224, lysine 229, isoleucine 270, 293 to 295, 318 to 320, and arginine 370; these read GLGGVG, VGV, and AVL.

The protein belongs to the zinc-containing alcohol dehydrogenase family. Dimer of identical or heterodimer of closely related subunits alpha, beta, or gamma that are encoded by genes ADH1A, ADH1B, and ADH1C, respectively. It depends on Zn(2+) as a cofactor.

The protein localises to the cytoplasm. It carries out the reaction a primary alcohol + NAD(+) = an aldehyde + NADH + H(+). The enzyme catalyses a secondary alcohol + NAD(+) = a ketone + NADH + H(+). It catalyses the reaction butan-1-ol + NAD(+) = butanal + NADH + H(+). The catalysed reaction is 1-propanol + NAD(+) = propanal + NADH + H(+). Functionally, alcohol dehydrogenase. Oxidizes primary as well as secondary alcohols. Ethanol is a very poor substrate. The protein is Alcohol dehydrogenase 1A (ADH1A) of Pongo abelii (Sumatran orangutan).